The primary structure comprises 126 residues: uncharacterized protein (126 aa).

The Cytoplasmic segment spans residues 1 to 28 (MAGEAVSEHTPDSQEVTVTSVVCCLDSV). The chain crosses the membrane as a helical span at residues 29 to 49 (VEIGHHVVYSVVTPLIVAVLI). Over 50-75 (DTMAGEAVLEHTSDSQEEIVTTVVCS) the chain is Extracellular. The helical transmembrane segment at 76 to 96 (VVPLVCFVVSVVCFVISVVEI) threads the bilayer. A topological domain (cytoplasmic) is located at residue glycine 97. A helical transmembrane segment spans residues 98–118 (HHVVYSVVAPLTVTVAVETIA). At 119–126 (EEMDSVHT) the chain is on the extracellular side.

The protein resides in the membrane. This is an uncharacterized protein from Saccharomyces cerevisiae (strain ATCC 204508 / S288c) (Baker's yeast).